The sequence spans 312 residues: Elongation factor Ts (312 aa).

The interval 84 to 87 is involved in Mg(2+) ion dislocation from EF-Tu; it reads TDFV.

Belongs to the EF-Ts family.

Its subcellular location is the cytoplasm. Functionally, associates with the EF-Tu.GDP complex and induces the exchange of GDP to GTP. It remains bound to the aminoacyl-tRNA.EF-Tu.GTP complex up to the GTP hydrolysis stage on the ribosome. In Caulobacter vibrioides (strain ATCC 19089 / CIP 103742 / CB 15) (Caulobacter crescentus), this protein is Elongation factor Ts.